Reading from the N-terminus, the 200-residue chain is Ubiquitin-conjugating enzyme E2 K (200 aa).

At Ala2 the chain carries N-acetylalanine. A UBC core domain is found at 4–154 (IAVQRIKREF…ARLWAHVYAG (151 aa)). The residue at position 14 (Lys14) is an N6-acetyllysine; alternate. Residue Lys14 forms a Glycyl lysine isopeptide (Lys-Gly) (interchain with G-Cter in SUMO); alternate linkage. Lys14 participates in a covalent cross-link: Glycyl lysine isopeptide (Lys-Gly) (interchain with G-Cter in SUMO1); alternate. Cys92 functions as the Glycyl thioester intermediate in the catalytic mechanism. At Ser159 the chain carries Phosphoserine. The 41-residue stretch at 160–200 (PEYTKKIENLCAMGFDRNAVIVALSSKSWDVETATELLLSN) folds into the UBA domain.

It belongs to the ubiquitin-conjugating enzyme family. As to quaternary structure, interacts with RNF138/NARF. Interacts with BRCA1. In terms of processing, sumoylation at Lys-14 impairs catalytic activity.

It is found in the cytoplasm. The catalysed reaction is S-ubiquitinyl-[E1 ubiquitin-activating enzyme]-L-cysteine + [E2 ubiquitin-conjugating enzyme]-L-cysteine = [E1 ubiquitin-activating enzyme]-L-cysteine + S-ubiquitinyl-[E2 ubiquitin-conjugating enzyme]-L-cysteine.. Its pathway is protein modification; protein ubiquitination. Accepts ubiquitin from the E1 complex and catalyzes its covalent attachment to other proteins. In vitro, in the presence or in the absence of BRCA1-BARD1 E3 ubiquitin-protein ligase complex, catalyzes the synthesis of 'Lys-48'-linked polyubiquitin chains. Does not transfer ubiquitin directly to but elongates monoubiquitinated substrate protein. Mediates the selective degradation of short-lived and abnormal proteins, such as the endoplasmic reticulum-associated degradation (ERAD) of misfolded lumenal proteins. Ubiquitinates huntingtin. May mediate foam cell formation by the suppression of apoptosis of lipid-bearing macrophages through ubiquitination and subsequence degradation of p53/TP53. Proposed to be involved in ubiquitination and proteolytic processing of NF-kappa-B; in vitro supports ubiquitination of NFKB1. The polypeptide is Ubiquitin-conjugating enzyme E2 K (UBE2K) (Bos taurus (Bovine)).